A 704-amino-acid polypeptide reads, in one-letter code: Low calcium response locus protein D (704 aa).

Transmembrane regions (helical) follow at residues 18 to 35 (IMLA…VLPL), 42 to 61 (ILIA…AIYI), 108 to 132 (FVVG…FLVI), 200 to 220 (AIAG…IGVT), 235 to 259 (ILTV…GIIV), 278 to 297 (VVAQ…LFGL), and 304 to 320 (VTFL…GYML).

The protein belongs to the FHIPEP (flagella/HR/invasion proteins export pore) family.

It is found in the cell inner membrane. In terms of biological role, could be involved in the secretion of the yop virulence proteins. This Yersinia pestis protein is Low calcium response locus protein D (lcrD).